We begin with the raw amino-acid sequence, 487 residues long: WD repeat, SAM and U-box domain-containing protein 1 (487 aa).

WD repeat units lie at residues 10–47 (SHRD…ELPF), 52–93 (GHGY…AVLE), 95–134 (PGRS…LRRT), 137–176 (VNDT…LHAE), 179–227 (AHDL…SAGI), 237–276 (GQSA…LLYT), and 279–318 (QHDR…SAQG). The region spanning 347-411 (WSEEEVLAWL…MKKIEELKMV (65 aa)) is the SAM domain. Positions 416–487 (GTPDEFLCPI…MAIFRWSTSQ (72 aa)) constitute a U-box domain.

In Danio rerio (Zebrafish), this protein is WD repeat, SAM and U-box domain-containing protein 1 (wdsub1).